The chain runs to 175 residues: Adenine phosphoribosyltransferase (175 aa).

It belongs to the purine/pyrimidine phosphoribosyltransferase family. In terms of assembly, homodimer.

It localises to the cytoplasm. It catalyses the reaction AMP + diphosphate = 5-phospho-alpha-D-ribose 1-diphosphate + adenine. It functions in the pathway purine metabolism; AMP biosynthesis via salvage pathway; AMP from adenine: step 1/1. Its function is as follows. Catalyzes a salvage reaction resulting in the formation of AMP, that is energically less costly than de novo synthesis. This chain is Adenine phosphoribosyltransferase, found in Francisella philomiragia subsp. philomiragia (strain ATCC 25017 / CCUG 19701 / FSC 153 / O#319-036).